Consider the following 282-residue polypeptide: MDAVEPGGRGWASMLACRLWKAISRALFAEFLATGLYVFFGVGSVMRWPTALPSVLQIAITFNLVTAMAVQVTWKASGAHANPAVTLAFLVGSHISLPRAVAYVAAQLVGATVGAALLYGVMPGDIRETLGINVVRNSVSTGQAVAVELLLTLQLVLCVFASTDSRQTSGSPATMIGISVALGHLIGIHFTGCSMNPARSFGPAIIIGKFTVHWVFWVGPLMGALLASLIYNFVLFPDTKTLAQRLAILTGTVEVGTGAGAGAEPLKKESQPGSGAVEMESV.

Over 1–25 the chain is Cytoplasmic; sequence MDAVEPGGRGWASMLACRLWKAISR. The helical transmembrane segment at 26 to 46 threads the bilayer; it reads ALFAEFLATGLYVFFGVGSVM. Residues 47-54 lie on the Extracellular side of the membrane; that stretch reads RWPTALPS. The helical transmembrane segment at 55–73 threads the bilayer; the sequence is VLQIAITFNLVTAMAVQVT. Topologically, residues 74–78 are cytoplasmic; that stretch reads WKASG. The segment at residues 79-88 is an intramembrane region (discontinuously helical); it reads AHANPAVTLA. Residues 82–84 carry the NPA 1 motif; the sequence is NPA. Topologically, residues 89-99 are cytoplasmic; that stretch reads FLVGSHISLPR. The chain crosses the membrane as a helical span at residues 100–121; sequence AVAYVAAQLVGATVGAALLYGV. Residues 122–141 lie on the Extracellular side of the membrane; the sequence is MPGDIRETLGINVVRNSVST. The helical transmembrane segment at 142 to 162 threads the bilayer; that stretch reads GQAVAVELLLTLQLVLCVFAS. The Cytoplasmic segment spans residues 163-168; it reads TDSRQT. Residues 169–188 form a helical membrane-spanning segment; it reads SGSPATMIGISVALGHLIGI. The Extracellular segment spans residues 189-192; that stretch reads HFTG. An intramembrane region (discontinuously helical) is located at residues 193–205; it reads CSMNPARSFGPAI. An NPA 2 motif is present at residues 196 to 198; it reads NPA. Residues 206-213 lie on the Extracellular side of the membrane; the sequence is IIGKFTVH. A helical membrane pass occupies residues 214 to 234; that stretch reads WVFWVGPLMGALLASLIYNFV. Over 235 to 282 the chain is Cytoplasmic; the sequence is LFPDTKTLAQRLAILTGTVEVGTGAGAGAEPLKKESQPGSGAVEMESV. Positions 260–282 are disordered; that stretch reads GAGAEPLKKESQPGSGAVEMESV.

This sequence belongs to the MIP/aquaporin (TC 1.A.8) family. As to quaternary structure, homotetramer; each monomer provides an independent solute pore.

It localises to the cytoplasmic vesicle membrane. It catalyses the reaction nitrate(in) = nitrate(out). The enzyme catalyses iodide(out) = iodide(in). The catalysed reaction is bromide(in) = bromide(out). It carries out the reaction chloride(in) = chloride(out). It catalyses the reaction Na(+)(in) = Na(+)(out). The enzyme catalyses H2O(in) = H2O(out). The catalysed reaction is CO2(out) = CO2(in). It carries out the reaction NH4(+)(in) = NH4(+)(out). Functionally, aquaporins form homotetrameric transmembrane channels, with each monomer independently mediating water transport across the plasma membrane along its osmotic gradient. Unlike classical aquaporins, AQP6 is an intracellular channel with selective anion permeability, particularly for nitrate, and exhibits very low water permeability. It may also facilitate the transport of gases, such as CO2 and NH4(+), as demonstrated in vitro. This chain is Aquaporin-6, found in Homo sapiens (Human).